A 738-amino-acid polypeptide reads, in one-letter code: uncharacterized protein (738 aa).

3 stretches are compositionally biased toward polar residues: residues 1-34 (MSSSSKDSSFQVETPVQNILETSTNSELQDQVSS), 140-169 (TSSDFQSKDSLSTTQPSVSGGNGSTSQSPP), and 177-197 (KPFSISNEPVEQETENSSTKD). Disordered regions lie at residues 1 to 51 (MSSS…AASI) and 140 to 197 (TSSD…STKD). One can recognise an RRM domain in the interval 363 to 434 (SRLFLGHLNT…QKLHLEISKI (72 aa)). The disordered stretch occupies residues 466-487 (YPTSSRKRTRSPLMSKGKSYDR).

This is an uncharacterized protein from Schizosaccharomyces pombe (strain 972 / ATCC 24843) (Fission yeast).